The primary structure comprises 79 residues: Acyl carrier protein (79 aa).

Residues 2–77 (SNIEERVKKI…QAIDYINAHA (76 aa)) enclose the Carrier domain. Residue serine 37 is modified to O-(pantetheine 4'-phosphoryl)serine.

The protein belongs to the acyl carrier protein (ACP) family. In terms of processing, 4'-phosphopantetheine is transferred from CoA to a specific serine of apo-ACP by AcpS. This modification is essential for activity because fatty acids are bound in thioester linkage to the sulfhydryl of the prosthetic group.

The protein resides in the cytoplasm. Its pathway is lipid metabolism; fatty acid biosynthesis. Functionally, carrier of the growing fatty acid chain in fatty acid biosynthesis. In Thioalkalivibrio sulfidiphilus (strain HL-EbGR7), this protein is Acyl carrier protein.